The sequence spans 255 residues: DNA polymerase epsilon subunit C (255 aa).

The interval 109–255 (KTSSGLHKLS…DEDEASADDG (147 aa)) is disordered. Residues 135-156 (MEEDIPEEDLQEDDEMDVDETE) are compositionally biased toward acidic residues. Low complexity predominate over residues 171–184 (KASASAKSILSAFK). Composition is skewed to acidic residues over residues 199–219 (TEED…EIDP) and 236–255 (DLDE…ADDG).

Heterotetramer. Consists of four subunits: POL2, DPB2, DPB3 and DPB4.

The protein resides in the nucleus. In terms of biological role, as accessory component of the DNA polymerase epsilon (DNA polymerase II) participates in chromosomal DNA replication. The sequence is that of DNA polymerase epsilon subunit C (DPB3) from Candida glabrata (strain ATCC 2001 / BCRC 20586 / JCM 3761 / NBRC 0622 / NRRL Y-65 / CBS 138) (Yeast).